The sequence spans 165 residues: E3 ubiquitin ligase complex SCF subunit sconC (165 aa).

The interval 106–165 is interaction with the F-box domain of F-box proteins; sequence ILAANYLDIKALLDVGCKTVANMIKGKSPEEIRKTFNIQNDFTPEEEDQIRRENEWAEDR.

It belongs to the SKP1 family. In terms of assembly, component of the SCF (SKP1-CUL1-F-box protein) E3 ubiquitin ligase complexes.

It functions in the pathway protein modification; protein ubiquitination. Its function is as follows. Essential component of the SCF (SKP1-CUL1-F-box protein) E3 ubiquitin ligase complexes, which mediate the ubiquitination and subsequent proteasomal degradation of target proteins. Controls sulfur metabolite repression, probably by mediating the inactivation or degradation of the metR transcription factor. The protein is E3 ubiquitin ligase complex SCF subunit sconC (sconC) of Arthroderma otae (strain ATCC MYA-4605 / CBS 113480) (Microsporum canis).